Here is a 129-residue protein sequence, read N- to C-terminus: Small ribosomal subunit protein uS11 (129 aa).

Belongs to the universal ribosomal protein uS11 family. Part of the 30S ribosomal subunit. Interacts with proteins S7 and S18. Binds to IF-3.

Located on the platform of the 30S subunit, it bridges several disparate RNA helices of the 16S rRNA. Forms part of the Shine-Dalgarno cleft in the 70S ribosome. In Phocaeicola vulgatus (strain ATCC 8482 / DSM 1447 / JCM 5826 / CCUG 4940 / NBRC 14291 / NCTC 11154) (Bacteroides vulgatus), this protein is Small ribosomal subunit protein uS11.